Here is a 267-residue protein sequence, read N- to C-terminus: Ribosomal RNA small subunit methyltransferase A (267 aa).

S-adenosyl-L-methionine-binding residues include N16, L18, G43, E64, D89, and N110.

It belongs to the class I-like SAM-binding methyltransferase superfamily. rRNA adenine N(6)-methyltransferase family. RsmA subfamily.

Its subcellular location is the cytoplasm. It carries out the reaction adenosine(1518)/adenosine(1519) in 16S rRNA + 4 S-adenosyl-L-methionine = N(6)-dimethyladenosine(1518)/N(6)-dimethyladenosine(1519) in 16S rRNA + 4 S-adenosyl-L-homocysteine + 4 H(+). Specifically dimethylates two adjacent adenosines (A1518 and A1519) in the loop of a conserved hairpin near the 3'-end of 16S rRNA in the 30S particle. May play a critical role in biogenesis of 30S subunits. In Pseudomonas putida (strain ATCC 47054 / DSM 6125 / CFBP 8728 / NCIMB 11950 / KT2440), this protein is Ribosomal RNA small subunit methyltransferase A.